Here is a 130-residue protein sequence, read N- to C-terminus: Histone H2A.2 (130 aa).

An N6-acetyllysine mark is found at Lys4 and Lys6. At Gln104 the chain carries N5-methylglutamine. Residue Lys125 forms a Glycyl lysine isopeptide (Lys-Gly) (interchain with G-Cter in SUMO) linkage. Position 127 is a phosphoserine (Ser127). Positions 127-128 (SQ) match the [ST]-Q motif motif.

Belongs to the histone H2A family. As to quaternary structure, the nucleosome is a histone octamer containing two molecules each of H2A, H2B, H3 and H4 assembled in one H3-H4 heterotetramer and two H2A-H2B heterodimers. The octamer wraps approximately 147 bp of DNA. Post-translationally, phosphorylated to form H2AS128ph (gamma-H2A) in response to DNA double-strand breaks (DSBs) generated by exogenous genotoxic agents and by stalled replication forks. Phosphorylation is dependent on the DNA damage checkpoint kinases MEC1/ATR and TEL1/ATM, spreads on either side of a detected DSB site and may mark the surrounding chromatin for recruitment of proteins required for DNA damage signaling and repair. Gamma-H2A is removed from the DNA prior to the strand invasion-primer extension step of the repair process and subsequently dephosphorylated. Dephosphorylation is necessary for efficient recovery from the DNA damage checkpoint. In terms of processing, acetylated by ESA1 to form H2AK4ac and H2AK7ac.

The protein resides in the nucleus. Its subcellular location is the chromosome. In terms of biological role, core component of nucleosome which plays a central role in DNA double strand break (DSB) repair. Nucleosomes wrap and compact DNA into chromatin, limiting DNA accessibility to the cellular machineries which require DNA as a template. Histones thereby play a central role in transcription regulation, DNA repair, DNA replication and chromosomal stability. DNA accessibility is regulated via a complex set of post-translational modifications of histones, also called histone code, and nucleosome remodeling. The chain is Histone H2A.2 (HTA2) from Meyerozyma guilliermondii (strain ATCC 6260 / CBS 566 / DSM 6381 / JCM 1539 / NBRC 10279 / NRRL Y-324) (Yeast).